Here is a 190-residue protein sequence, read N- to C-terminus: MDAPVKMIVGLGNPGRTYEDTRHNAGFMVLDRLAARWGAVFKADRQRKCEVAAGPGVLLVKPSTFMNESGLCVGPMMRFFKLDPRSVFVIHDEVDFPLGVIKLREKGSAGGHNGIKSLIAHMGTQEFPRLRFGIGQPRGKGEMIGHVLGKFRPEERELLDVTLGKAEDAVLYTMEHGITRAGNIFNAVPG.

Y18 contributes to the tRNA binding site. Residue H23 is the Proton acceptor of the active site. TRNA contacts are provided by F65, N67, and N113.

The protein belongs to the PTH family. As to quaternary structure, monomer.

Its subcellular location is the cytoplasm. The enzyme catalyses an N-acyl-L-alpha-aminoacyl-tRNA + H2O = an N-acyl-L-amino acid + a tRNA + H(+). In terms of biological role, hydrolyzes ribosome-free peptidyl-tRNAs (with 1 or more amino acids incorporated), which drop off the ribosome during protein synthesis, or as a result of ribosome stalling. Functionally, catalyzes the release of premature peptidyl moieties from peptidyl-tRNA molecules trapped in stalled 50S ribosomal subunits, and thus maintains levels of free tRNAs and 50S ribosomes. In Akkermansia muciniphila (strain ATCC BAA-835 / DSM 22959 / JCM 33894 / BCRC 81048 / CCUG 64013 / CIP 107961 / Muc), this protein is Peptidyl-tRNA hydrolase.